The primary structure comprises 303 residues: UDP-3-O-acyl-N-acetylglucosamine deacetylase (303 aa).

Zn(2+) contacts are provided by histidine 78, histidine 237, and aspartate 241. The active-site Proton donor is histidine 264.

It belongs to the LpxC family. Zn(2+) is required as a cofactor.

The enzyme catalyses a UDP-3-O-[(3R)-3-hydroxyacyl]-N-acetyl-alpha-D-glucosamine + H2O = a UDP-3-O-[(3R)-3-hydroxyacyl]-alpha-D-glucosamine + acetate. It functions in the pathway glycolipid biosynthesis; lipid IV(A) biosynthesis; lipid IV(A) from (3R)-3-hydroxytetradecanoyl-[acyl-carrier-protein] and UDP-N-acetyl-alpha-D-glucosamine: step 2/6. Functionally, catalyzes the hydrolysis of UDP-3-O-myristoyl-N-acetylglucosamine to form UDP-3-O-myristoylglucosamine and acetate, the committed step in lipid A biosynthesis. This Teredinibacter turnerae (strain ATCC 39867 / T7901) protein is UDP-3-O-acyl-N-acetylglucosamine deacetylase.